The chain runs to 471 residues: UDP-N-acetylmuramate--L-alanine ligase (471 aa).

114–120 (GTHGKTT) lines the ATP pocket.

The protein belongs to the MurCDEF family.

It is found in the cytoplasm. It catalyses the reaction UDP-N-acetyl-alpha-D-muramate + L-alanine + ATP = UDP-N-acetyl-alpha-D-muramoyl-L-alanine + ADP + phosphate + H(+). The protein operates within cell wall biogenesis; peptidoglycan biosynthesis. Cell wall formation. The polypeptide is UDP-N-acetylmuramate--L-alanine ligase (Chlorobaculum parvum (strain DSM 263 / NCIMB 8327) (Chlorobium vibrioforme subsp. thiosulfatophilum)).